The following is a 954-amino-acid chain: Glycine dehydrogenase (decarboxylating) (954 aa).

Polar residues predominate over residues 1–13; the sequence is MTELLQSLSTQNE. The tract at residues 1 to 24 is disordered; the sequence is MTELLQSLSTQNEFVARHNGPNKS. An N6-(pyridoxal phosphate)lysine modification is found at Lys704.

The protein belongs to the GcvP family. The glycine cleavage system is composed of four proteins: P, T, L and H. It depends on pyridoxal 5'-phosphate as a cofactor.

It catalyses the reaction N(6)-[(R)-lipoyl]-L-lysyl-[glycine-cleavage complex H protein] + glycine + H(+) = N(6)-[(R)-S(8)-aminomethyldihydrolipoyl]-L-lysyl-[glycine-cleavage complex H protein] + CO2. The glycine cleavage system catalyzes the degradation of glycine. The P protein binds the alpha-amino group of glycine through its pyridoxal phosphate cofactor; CO(2) is released and the remaining methylamine moiety is then transferred to the lipoamide cofactor of the H protein. The protein is Glycine dehydrogenase (decarboxylating) of Vibrio campbellii (strain ATCC BAA-1116).